The sequence spans 710 residues: Ephexin-1 (710 aa).

Basic and acidic residues-rich tracts occupy residues Met-1 to Lys-11 and Glu-26 to Thr-41. A disordered region spans residues Met-1 to Trp-143. The segment at Met-1 to Lys-273 is regulatory region; modulates activity toward RHOA, RAC1 and CDC42. Polar residues-rich tracts occupy residues Ala-89–Leu-102 and Met-127–Asn-136. Residue Tyr-179 is modified to Phosphotyrosine. Residues Arg-194 to Leu-236 form a disordered region. Residues Asp-213–Pro-227 are compositionally biased toward acidic residues. The DH domain occupies Lys-273–Gly-457. The PH domain maps to Trp-489 to Arg-601. Residues Leu-612–Asn-673 enclose the SH3 domain. Residues Val-687–Lys-699 show a composition bias toward basic and acidic residues. Residues Val-687 to Gln-710 are disordered. Residues Asp-700 to Gln-710 are compositionally biased toward basic residues.

Interacts with CDK5R1 and EPHA4; activated by EPHA4 through the CDK5 kinase. In terms of processing, src-dependent phosphorylation at Tyr-179 upon EPHA4 activation increases the guanine exchange factor activity toward RHOA. Phosphorylation by CDK5 upon EPHA4 activation by EFNA1 may regulate dendritic spine morphogenesis. In terms of tissue distribution, highly expressed in brain specifically in caudate nucleus and to a lower extent in amygdala and hippocampus. Also detected in lung.

The protein localises to the cytoplasm. It is found in the membrane. It localises to the cell projection. The protein resides in the growth cone. In terms of biological role, acts as a guanine nucleotide exchange factor (GEF) which differentially activates the GTPases RHOA, RAC1 and CDC42. Plays a role in axon guidance regulating ephrin-induced growth cone collapse and dendritic spine morphogenesis. Upon activation by ephrin through EPHA4, the GEF activity switches toward RHOA resulting in its activation. Activated RHOA promotes cone retraction at the expense of RAC1- and CDC42-stimulated growth cone extension. The protein is Ephexin-1 (NGEF) of Homo sapiens (Human).